Consider the following 349-residue polypeptide: Protein DMR6-LIKE OXYGENASE 1 (349 aa).

The Fe2OG dioxygenase domain occupies 197 to 296; it reads HAQHMAFNYY…RLSIPTFYFP (100 aa). Tyrosine 206 is a binding site for 2-oxoglutarate. Fe cation-binding residues include histidine 221, aspartate 223, and histidine 277. The 2-oxoglutarate site is built by arginine 287 and serine 289.

The protein belongs to the iron/ascorbate-dependent oxidoreductase family. Requires L-ascorbate as cofactor. The cofactor is Fe(2+).

It carries out the reaction salicylate + NADH + O2 + H(+) = 2,3-dihydroxybenzoate + NAD(+) + H2O. Converts salicylic acid (SA) to both 2,3-dihydroxybenzoic acid (2,3-DHBA) and 2,5-DHBA in vitro but only 2,3-DHBA in vivo. Component of a negative feedback regulation system of SA levels during senescence. Regulates both onset and progression of leaf senescence. Negative regulator of defense against Hyaloperonospora arabidopsidis. In terms of biological role, (Microbial infection) Confers susceptibility to the downy mildew pathogen Hyaloperonospora arabidopsidis. In Arabidopsis thaliana (Mouse-ear cress), this protein is Protein DMR6-LIKE OXYGENASE 1.